Here is a 448-residue protein sequence, read N- to C-terminus: Microtubule-associated protein tau (448 aa).

Residues 1-16 (MAEPRQEFDVMEDHAQ) are compositionally biased toward basic and acidic residues. The interval 1 to 264 (MAEPRQEFDV…GPMPDLKNVK (264 aa)) is disordered. Position 2 is an N-acetylalanine (Ala2). Tyr19 is modified (phosphotyrosine). Lys33 is covalently cross-linked (Glycyl lysine isopeptide (Lys-Gly) (interchain with G-Cter in ubiquitin)). Ser35 and Ser50 each carry phosphoserine. The span at 50–60 (SETSDAKSTPT) shows a compositional bias: polar residues. 2 positions are modified to phosphothreonine: Thr58 and Thr60. Residues 71–89 (EGAPGEQAAAQAPAEIPEG) are compositionally biased toward low complexity. Thr100 carries the phosphothreonine modification. A compositionally biased stretch (basic and acidic residues) spans 119–135 (KGKDGTGPDDKKTKGAD). Thr144 bears the Phosphothreonine mark. Arg146 carries the post-translational modification Omega-N-methylarginine. Lys154 is subject to N6,N6-dimethyllysine; alternate. Lys154 is subject to N6-acetyllysine; alternate. 4 positions are modified to phosphothreonine: Thr160, Thr166, Thr167, and Thr172. Over residues 163–176 (PAKTTPTPKTSPAT) the composition is skewed to low complexity. A compositionally biased stretch (basic and acidic residues) spans 189–200 (KSERGESGKSGD). 2 positions are modified to phosphoserine: Ser198 and Ser202. The segment covering 201 to 221 (RSGYSSPGSPGTPGSRSRTPS) has biased composition (low complexity). The residue at position 204 (Tyr204) is a Phosphotyrosine. Residues Ser205, Ser206, and Ser209 each carry the phosphoserine modification. Residues Thr212 and Thr219 each carry the phosphothreonine modification. Ser221 is subject to Phosphoserine. A Phosphothreonine modification is found at Thr224. Lys232 carries the N6-acetyllysine modification. The residue at position 238 (Thr238) is a Phosphothreonine. Residues Ser242 and Ser244 each carry the phosphoserine modification. Tau/MAP repeat units lie at residues 251–281 (QAAPGPMPDLKNVKSKIGSTENLKHQPGGGK), 282–312 (VQIINKKLDLSNVQSKCGSKDNIKHVPGGGS), 313–343 (VQIVYKPVDLSKVTSKCGSLGNIHHKPGGGQ), and 344–375 (VEVKSEKLDFKDRVQSKIGSLDNITHVPGGGN). A Glycyl lysine isopeptide (Lys-Gly) (interchain with G-Cter in ubiquitin) cross-link involves residue Lys261. N6-acetyllysine; alternate is present on Lys266. Lys266 carries the post-translational modification N6-methyllysine; alternate. Lys266 participates in a covalent cross-link: Glycyl lysine isopeptide (Lys-Gly) (interchain with G-Cter in ubiquitin); alternate. A Phosphoserine modification is found at Ser269. A Glycyl lysine isopeptide (Lys-Gly) (interchain with G-Cter in ubiquitin) cross-link involves residue Lys274. Lys288 is subject to N6-acetyllysine; alternate. A Glycyl lysine isopeptide (Lys-Gly) (interchain with G-Cter in ubiquitin); alternate cross-link involves residue Lys288. Residues Ser292 and Ser296 each carry the phosphoserine modification. Lys297 carries the post-translational modification N6-acetyllysine. An intrachain disulfide couples Cys298 to Cys329. Residue Ser300 is modified to Phosphoserine. An N6-acetyllysine; alternate modification is found at Lys305. Residue Lys305 forms a Glycyl lysine isopeptide (Lys-Gly) (interchain with G-Cter in ubiquitin); alternate linkage. Ser312 is subject to Phosphoserine. Lys318 is subject to N6,N6-dimethyllysine; alternate. Residues Lys318, Lys324, and Lys328 each carry the N6-acetyllysine; alternate modification. Glycyl lysine isopeptide (Lys-Gly) (interchain with G-Cter in ubiquitin); alternate cross-links involve residues Lys318, Lys324, and Lys328. Phosphoserine is present on Ser331. N6-acetyllysine; alternate is present on residues Lys338, Lys350, and Lys354. Glycyl lysine isopeptide (Lys-Gly) (interchain with G-Cter in ubiquitin); alternate cross-links involve residues Lys338, Lys350, and Lys354. At Arg356 the chain carries Omega-N-methylarginine. Residue Ser359 is modified to Phosphoserine. Lys360 participates in a covalent cross-link: Glycyl lysine isopeptide (Lys-Gly) (interchain with G-Cter in ubiquitin). Residue Ser363 is modified to Phosphoserine. Lys376 carries the post-translational modification N6-acetyllysine; alternate. A Glycyl lysine isopeptide (Lys-Gly) (interchain with G-Cter in ubiquitin); alternate cross-link involves residue Lys376. Lys382 is covalently cross-linked (Glycyl lysine isopeptide (Lys-Gly) (interchain with G-Cter in ubiquitin)). Position 392 is an N6-acetyllysine; alternate (Lys392). A Glycyl lysine isopeptide (Lys-Gly) (interchain with G-Cter in ubiquitin); alternate cross-link involves residue Lys392. Tyr401 carries the phosphotyrosine modification. Phosphoserine occurs at positions 403 and 407. Positions 405–424 (VVSGDTSPRHLSNVSSTGSI) are disordered. Over residues 408–423 (GDTSPRHLSNVSSTGS) the composition is skewed to polar residues. At Thr410 the chain carries Phosphothreonine. Phosphoserine occurs at positions 411, 416, 423, and 429. Thr434 is modified (phosphothreonine).

In terms of assembly, interacts with MARK1, MARK2, MARK3 and MARK4. Interacts with SQSTM1 when polyubiquitinated. Interacts with PSMC2 through SQSTM1. Interacts with FKBP4. Binds to CSNK1D. Interacts with SGK1. Interacts with PIN1. Interacts with LRRK2. Interacts with LRP1, leading to endocytosis; this interaction is reduced in the presence of LRPAP1/RAP. Polyubiquitinated. Requires functional TRAF6 and may provoke SQSTM1-dependent degradation by the proteasome. Post-translationally, phosphorylation at various serine and threonine residues in S-P or T-P motifs by proline-directed protein kinases (PDPK1, CDK1, CDK5, GSK3, MAPK) (a few sites per protein in interphase, more in mitosis), and at serine residues in K-X-G-S motifs by MAP/microtubule affinity-regulating kinase (MARK1, MARK2, MARK3, MARK4), causing detachment from microtubules, and their disassembly. Phosphorylation at Ser-269 by BRSK1 and BRSK2 in neurons affects ability to bind microtubules and plays a role in neuron polarization. Phosphorylated by PHK. Dephosphorylation at several serine and threonine residues by the serine/threonine phosphatase PPP5C. In terms of processing, O-glycosylated; contains at least 4 GlcNAc. Site-specific or stoichiometric changes in glycosylation may modulate tau function and also play a role in PHF's formation. As to expression, expressed in neurons.

The protein resides in the cytoplasm. It localises to the cytosol. Its subcellular location is the cell membrane. It is found in the cytoskeleton. The protein localises to the cell projection. The protein resides in the axon. It localises to the dendrite. Its subcellular location is the secreted. Promotes microtubule assembly and stability, and might be involved in the establishment and maintenance of neuronal polarity. The C-terminus binds axonal microtubules while the N-terminus binds neural plasma membrane components, suggesting that tau functions as a linker protein between both. Axonal polarity is predetermined by tau localization (in the neuronal cell) in the domain of the cell body defined by the centrosome. The short isoforms allow plasticity of the cytoskeleton whereas the longer isoforms may preferentially play a role in its stabilization. This chain is Microtubule-associated protein tau (MAPT), found in Bos taurus (Bovine).